The sequence spans 581 residues: Arginine--tRNA ligase (581 aa).

The short motif at 126 to 136 (PNLAKEMHVGH) is the 'HIGH' region element.

Belongs to the class-I aminoacyl-tRNA synthetase family. In terms of assembly, monomer.

The protein localises to the cytoplasm. The enzyme catalyses tRNA(Arg) + L-arginine + ATP = L-arginyl-tRNA(Arg) + AMP + diphosphate. The protein is Arginine--tRNA ligase of Shewanella loihica (strain ATCC BAA-1088 / PV-4).